The following is a 381-amino-acid chain: Sulfate/thiosulfate import ATP-binding protein CysA (381 aa).

One can recognise an ABC transporter domain in the interval 3–233 (ILVYEVSKSL…PIDYFVGIFS (231 aa)). 35-42 (GPSGSGKS) is an ATP binding site.

Belongs to the ABC transporter superfamily. Sulfate/tungstate importer (TC 3.A.1.6) family.

The protein resides in the plastid. It localises to the chloroplast. It catalyses the reaction sulfate(out) + ATP + H2O = sulfate(in) + ADP + phosphate + H(+). It carries out the reaction thiosulfate(out) + ATP + H2O = thiosulfate(in) + ADP + phosphate + H(+). In terms of biological role, part of the ABC transporter complex involved in sulfate/thiosulfate import. Responsible for energy coupling to the transport system. This is Sulfate/thiosulfate import ATP-binding protein CysA from Anthoceros angustus (Hornwort).